A 152-amino-acid chain; its full sequence is Deoxyuridine 5'-triphosphate nucleotidohydrolase (152 aa).

Residues 71-73 (RSG), Asn84, 88-90 (LID), and Met98 contribute to the substrate site.

It belongs to the dUTPase family. Requires Mg(2+) as cofactor.

It catalyses the reaction dUTP + H2O = dUMP + diphosphate + H(+). It participates in pyrimidine metabolism; dUMP biosynthesis; dUMP from dCTP (dUTP route): step 2/2. Its function is as follows. This enzyme is involved in nucleotide metabolism: it produces dUMP, the immediate precursor of thymidine nucleotides and it decreases the intracellular concentration of dUTP so that uracil cannot be incorporated into DNA. The polypeptide is Deoxyuridine 5'-triphosphate nucleotidohydrolase (Shewanella sp. (strain ANA-3)).